The chain runs to 390 residues: Chorismate synthase 2 (390 aa).

NADP(+) contacts are provided by arginine 39 and arginine 45. FMN contacts are provided by residues 132 to 134 (RSS), 253 to 254 (NA), glycine 298, 313 to 317 (KPIPT), and arginine 339.

Belongs to the chorismate synthase family. As to quaternary structure, homotetramer. Requires FMNH2 as cofactor.

It carries out the reaction 5-O-(1-carboxyvinyl)-3-phosphoshikimate = chorismate + phosphate. Its pathway is metabolic intermediate biosynthesis; chorismate biosynthesis; chorismate from D-erythrose 4-phosphate and phosphoenolpyruvate: step 7/7. Catalyzes the anti-1,4-elimination of the C-3 phosphate and the C-6 proR hydrogen from 5-enolpyruvylshikimate-3-phosphate (EPSP) to yield chorismate, which is the branch point compound that serves as the starting substrate for the three terminal pathways of aromatic amino acid biosynthesis. This reaction introduces a second double bond into the aromatic ring system. In Bacillus cereus (strain ATCC 14579 / DSM 31 / CCUG 7414 / JCM 2152 / NBRC 15305 / NCIMB 9373 / NCTC 2599 / NRRL B-3711), this protein is Chorismate synthase 2.